Here is a 311-residue protein sequence, read N- to C-terminus: Ferritin-like catalase Nec2 (311 aa).

Positions 1-25 (MAFLSNMAMFITMLMFSSMMHPCFS) are cleaved as a signal peptide. Asn-128, Asn-257, and Asn-289 each carry an N-linked (GlcNAc...) asparagine glycan.

Forms homomultimers. As to expression, observed in all flowers organs; mainly expressed in nectaries and, to a lower extent, in petals and ovules, as well as in stigmas and calyx at low levels.

The enzyme catalyses 2 H2O2 = O2 + 2 H2O. Involved in the production of blood-red nectar containing the alkaloid nesocodin and that serves as a visual attractant for pollinator visitation, including vertebrates such as Phelsuma geckos. The nectar is initially acidic and pale yellow, but slowly becomes alkaline before turning into red within 24 hours. Together with NEC1 and NEC3, facilitates the condensation of sinapaldehyde ((E)-3,5-dimethoxy-4-hydroxycinnamaldehyde) and proline to form nesocodin, a pigment with a stable imine bond. Protects nesocodin from degradation by hydrogen peroxide H(2)O(2) by catalyzing the degradation of H(2)O(2) into water H(2)O and dioxygene O(2). This is Ferritin-like catalase Nec2 from Nesocodon mauritianus (Blue Mauritius bellflower).